The chain runs to 338 residues: Ketol-acid reductoisomerase (NADP(+)) (338 aa).

The KARI N-terminal Rossmann domain maps to 1 to 181 (MQVYYDKDCD…GGGRTGIIET (181 aa)). NADP(+)-binding positions include 24-27 (YGSQ), R47, S50, S52, and 82-85 (DEFQ). H107 is an active-site residue. NADP(+) is bound at residue G133. The region spanning 182–327 (TFKDETETDL…EKLRSMMPWI (146 aa)) is the KARI C-terminal knotted domain. Positions 190, 194, 226, and 230 each coordinate Mg(2+). Residue S251 coordinates substrate.

The protein belongs to the ketol-acid reductoisomerase family. Mg(2+) serves as cofactor.

The enzyme catalyses (2R)-2,3-dihydroxy-3-methylbutanoate + NADP(+) = (2S)-2-acetolactate + NADPH + H(+). The catalysed reaction is (2R,3R)-2,3-dihydroxy-3-methylpentanoate + NADP(+) = (S)-2-ethyl-2-hydroxy-3-oxobutanoate + NADPH + H(+). Its pathway is amino-acid biosynthesis; L-isoleucine biosynthesis; L-isoleucine from 2-oxobutanoate: step 2/4. It functions in the pathway amino-acid biosynthesis; L-valine biosynthesis; L-valine from pyruvate: step 2/4. In terms of biological role, involved in the biosynthesis of branched-chain amino acids (BCAA). Catalyzes an alkyl-migration followed by a ketol-acid reduction of (S)-2-acetolactate (S2AL) to yield (R)-2,3-dihydroxy-isovalerate. In the isomerase reaction, S2AL is rearranged via a Mg-dependent methyl migration to produce 3-hydroxy-3-methyl-2-ketobutyrate (HMKB). In the reductase reaction, this 2-ketoacid undergoes a metal-dependent reduction by NADPH to yield (R)-2,3-dihydroxy-isovalerate. The sequence is that of Ketol-acid reductoisomerase (NADP(+)) from Hahella chejuensis (strain KCTC 2396).